Here is a 342-residue protein sequence, read N- to C-terminus: S-adenosylmethionine:tRNA ribosyltransferase-isomerase (342 aa).

It belongs to the QueA family. In terms of assembly, monomer.

The protein localises to the cytoplasm. The catalysed reaction is 7-aminomethyl-7-carbaguanosine(34) in tRNA + S-adenosyl-L-methionine = epoxyqueuosine(34) in tRNA + adenine + L-methionine + 2 H(+). The protein operates within tRNA modification; tRNA-queuosine biosynthesis. Functionally, transfers and isomerizes the ribose moiety from AdoMet to the 7-aminomethyl group of 7-deazaguanine (preQ1-tRNA) to give epoxyqueuosine (oQ-tRNA). This Bacillus subtilis (strain 168) protein is S-adenosylmethionine:tRNA ribosyltransferase-isomerase.